A 337-amino-acid polypeptide reads, in one-letter code: Glyceraldehyde-3-phosphate dehydrogenase (337 aa).

NAD(+) is bound by residues 12 to 13, Asp34, and Arg79; that span reads RI. D-glyceraldehyde 3-phosphate contacts are provided by residues 150–152, Thr181, 210–211, and Arg233; these read SCT and TG. The active-site Nucleophile is the Cys151. Residue Asn315 coordinates NAD(+).

The protein belongs to the glyceraldehyde-3-phosphate dehydrogenase family. As to quaternary structure, homotetramer.

It localises to the cytoplasm. The catalysed reaction is D-glyceraldehyde 3-phosphate + phosphate + NAD(+) = (2R)-3-phospho-glyceroyl phosphate + NADH + H(+). It participates in carbohydrate degradation; glycolysis; pyruvate from D-glyceraldehyde 3-phosphate: step 1/5. This is Glyceraldehyde-3-phosphate dehydrogenase (GPD-1) from Claviceps purpurea (strain 20.1) (Ergot fungus).